A 365-amino-acid chain; its full sequence is WAT1-related protein At4g01430 (365 aa).

Helical transmembrane passes span 7-27 (WAPV…NALV), 39-59 (IFGA…SYIW), 76-96 (FISG…GLSY), 100-120 (TVSM…ALIF), 132-152 (AGVL…LLTF), 183-203 (WLLG…WMLF), 216-236 (YSST…LSLY), 250-270 (FVIL…TVVT), 280-300 (VFVS…DFLI), and 305-325 (LYLG…VFLW). The 132-residue stretch at 20–151 (MGSVNALVKK…ICIMGAMLLT (132 aa)) folds into the EamA 1 domain. Positions 216 to 324 (YSSTCLMSVF…VTITGLYVFL (109 aa)) constitute an EamA 2 domain. The interval 339–365 (LNSSQFSQNKDNEDHTIANHKDTNLPV) is disordered. Positions 348-365 (KDNEDHTIANHKDTNLPV) are enriched in basic and acidic residues.

It belongs to the drug/metabolite transporter (DMT) superfamily. Plant drug/metabolite exporter (P-DME) (TC 2.A.7.4) family.

The protein localises to the membrane. In Arabidopsis thaliana (Mouse-ear cress), this protein is WAT1-related protein At4g01430.